The sequence spans 643 residues: SURP and G-patch domain-containing protein 1 (643 aa).

Disordered stretches follow at residues 48 to 69 and 97 to 119; these read ARMEQKARQSHVPSPQPPHPGE and KAQTSTDSAPRAPPSMPTPSSLK. The residue at position 128 (Thr-128) is a Phosphothreonine. One copy of the SURP motif 1 repeat lies at 187 to 229; the sequence is VIEKLARFVAEGGPELEKVAMEDYKDNPAFTFLHDKNSREFLY. Ser-252 is modified (phosphoserine). An SURP motif 2 repeat occupies 262–305; it reads LAEKLARFIADGGPEVETIALQNNRENQAFSFLYDPNSQGYRYY. 2 disordered regions span residues 316–335 and 360–393; these read KAGSTGSFPAPAPNPSLRRK and AVNPTPSIPGKPTATAAVKRKRKSRWGPEEDKVE. Ser-322 bears the Phosphoserine mark. Positions 378-384 match the Nuclear localization signal motif; it reads KRKRKSR. A phosphoserine mark is found at Ser-407, Ser-409, Ser-412, and Ser-483. The 48-residue stretch at 560-607 folds into the G-patch domain; that stretch reads VENIGYQMLMKMGWKEGEGLGTEGQGIKNPVNKGATTIDGAGFGIDRP.

As to quaternary structure, component of the spliceosome.

It localises to the nucleus. Functionally, plays a role in pre-mRNA splicing. In Mus musculus (Mouse), this protein is SURP and G-patch domain-containing protein 1 (Sugp1).